A 557-amino-acid chain; its full sequence is Potassium-transporting ATPase potassium-binding subunit (557 aa).

The next 10 helical transmembrane spans lie at 6–26 (IQLL…GLGL), 59–79 (ALSL…ILFF), 127–147 (AGLT…LLAL), 172–192 (LYVL…FGVV), 247–267 (ISNF…VFLY), 278–298 (WAIF…VWTF), 363–383 (IVFG…LLTV), 410–430 (ILGI…SVSV), 475–495 (VMIA…VLVI), and 520–540 (FYIL…FPVL).

It belongs to the KdpA family. As to quaternary structure, the system is composed of three essential subunits: KdpA, KdpB and KdpC.

Its subcellular location is the cell inner membrane. Part of the high-affinity ATP-driven potassium transport (or Kdp) system, which catalyzes the hydrolysis of ATP coupled with the electrogenic transport of potassium into the cytoplasm. This subunit binds the periplasmic potassium ions and delivers the ions to the membrane domain of KdpB through an intramembrane tunnel. This Leptospira interrogans serogroup Icterohaemorrhagiae serovar Lai (strain 56601) protein is Potassium-transporting ATPase potassium-binding subunit.